The following is a 253-amino-acid chain: MMMKIPWGSIPVLMLLLLLGLIDISQAQLSCTGPPAIPGIPGIPGTPGPDGQPGTPGIKGEKGLPGLAGDHGEFGEKGDPGIPGNPGKVGPKGPMGPKGGPGAPGAPGPKGESGDYKATQKIAFSATRTINVPLRRDQTIRFDHVITNMNNNYEPRSGKFTCKVPGLYYFTYHASSRGNLCVNLMRGRERAQKVVTFCDYAYNTFQVTTGGMVLKLEQGENVFLQATDKNSLLGMEGANSIFSGFLLFPDMEA.

Residues 1-27 (MMMKIPWGSIPVLMLLLLLGLIDISQA) form the signal peptide. Residue Gln-28 is modified to Pyrrolidone carboxylic acid. 4-hydroxyproline occurs at positions 35, 38, 41, 53, and 56. Collagen-like domains lie at 37 to 86 (IPGI…PGNP) and 60 to 114 (GEKG…GESG). The interval 38–115 (PGIPGIPGTP…APGPKGESGD (78 aa)) is disordered. 5-hydroxylysine is present on residues Lys-59 and Lys-62. Position 65 is a 4-hydroxyproline (Pro-65). Over residues 70–79 (DHGEFGEKGD) the composition is skewed to basic and acidic residues. The residue at position 77 (Lys-77) is a 5-hydroxylysine. The segment covering 80–92 (PGIPGNPGKVGPK) has biased composition (low complexity). Residues Pro-83 and Pro-86 each carry the 4-hydroxyproline modification. 5-hydroxylysine is present on residues Lys-92 and Lys-98. The segment covering 96 to 105 (GPKGGPGAPG) has biased composition (gly residues). 4-hydroxyproline is present on residues Pro-101, Pro-104, and Pro-107. Lys-110 carries the 5-hydroxylysine modification. A C1q domain is found at 117-253 (KATQKIAFSA…GFLLFPDMEA (137 aa)). Cys-181 and Cys-198 are joined by a disulfide. The Ca(2+) site is built by Asp-199, Tyr-200, and Gln-206.

As to quaternary structure, core component of the complement C1 complex, a calcium-dependent complex composed of 1 molecule of the C1Q subcomplex, 2 molecules of C1R and 2 molecules of C1S. The C1Q subcomplex is composed 18 subunits: 3 chains of C1QA, C1QB, and C1QC trimerize to form 6 collagen-like triple helices connected to six globular ligand-recognition modules (C1q domain). In terms of processing, hydroxylated on lysine and proline residues. Hydroxylated lysine residues can be glycosylated. Human C1Q contains up to 68.3 hydroxylysine-galactosylglucose residues and up to 2.5 hydroxylysine-galactose per molecule. Total percentage hydroxylysine residues glycosylated is 86.4%.

The protein resides in the secreted. The protein localises to the cell surface. With respect to regulation, the C1Q subcomplex is inhibited by sulfated molecules, such as triterpenoid sulfates, heparan sulfate, or chondroitin sulfates. In terms of biological role, core component of the complement C1 complex, a multiprotein complex that initiates the classical pathway of the complement system, a cascade of proteins that leads to phagocytosis and breakdown of pathogens and signaling that strengthens the adaptive immune system. The classical complement pathway is initiated by the C1Q subcomplex of the C1 complex, which specifically binds IgG or IgM immunoglobulins complexed with antigens, forming antigen-antibody complexes on the surface of pathogens: C1QA, together with C1QB and C1QC, specifically recognizes and binds the Fc regions of IgG or IgM via its C1q domain. Immunoglobulin-binding activates the proenzyme C1R, which cleaves C1S, initiating the proteolytic cascade of the complement system. The C1Q subcomplex is activated by a hexamer of IgG complexed with antigens, while it is activated by a pentameric IgM. The C1Q subcomplex also recognizes and binds phosphatidylserine exposed on the surface of cells undergoing programmed cell death, possibly promoting activation of the complement system. The polypeptide is Complement C1q subcomponent subunit B (Homo sapiens (Human)).